We begin with the raw amino-acid sequence, 272 residues long: Large ribosomal subunit protein uL2cz/uL2cy (272 aa).

Over residues 1–13 (MHLYKTSTPSTRN) the composition is skewed to polar residues. Disordered regions lie at residues 1 to 27 (MHLYKTSTPSTRNGAVDSQVKSNPRNN) and 222 to 272 (NPVD…RRSK).

It belongs to the universal ribosomal protein uL2 family. Part of the 50S ribosomal subunit.

It is found in the plastid. The protein localises to the chloroplast. The protein is Large ribosomal subunit protein uL2cz/uL2cy (rpl2-A) of Buxus microphylla (Littleleaf boxwood).